The sequence spans 169 residues: Probable calcium-binding protein CML20 (169 aa).

The disordered stretch occupies residues 1-23; the sequence is MSSIYRTVSRKEKPRRHHGLTTQ. 4 EF-hand domains span residues 23–58, 59–94, 96–131, and 132–167; these read QKKQEIKEAFELFDTDGSGTIDAKELNVAMRALGFE, MTEEQINKMIADVDKDGSGAIDFDEFVHMMTAKIGE, DTKEELTKAFQIIDLDKNGKISPDDIKRMAKDLGEN, and FTDAEIREMVEEADRDRDGEVNMDEFMRMMRRTAYG. Ca(2+) is bound by residues aspartate 36, aspartate 38, serine 40, threonine 42, glutamate 47, aspartate 72, aspartate 74, serine 76, glutamate 83, aspartate 109, aspartate 111, asparagine 113, lysine 115, aspartate 120, aspartate 145, aspartate 147, aspartate 149, glutamate 151, and glutamate 156.

In terms of assembly, interacts with TON1A and TON1B. Interacts with SAC3A and SAC3B. Interacts with UCH1 and UCH2.

In terms of biological role, potential calcium sensor. This Arabidopsis thaliana (Mouse-ear cress) protein is Probable calcium-binding protein CML20.